The chain runs to 322 residues: Cysteine protease YopT (322 aa).

Residues cysteine 139, histidine 258, and aspartate 274 contribute to the active site.

The protein belongs to the peptidase C58 family. Interacts with human ARHA.

It localises to the secreted. Cysteine protease, which is translocated into infected cells and plays a central role in pathogenesis by cleaving the C-terminus end of the human small GTPase RhoA/ARHA, a regulator of cytoskeleton. Once cleaved, ARHA loses its lipid modification, and is released from the cell membrane, leading to the subsequent disruption of actin cytoskeleton of the host cell. This chain is Cysteine protease YopT (yopT), found in Yersinia pseudotuberculosis serotype I (strain IP32953).